A 121-amino-acid polypeptide reads, in one-letter code: Large ribosomal subunit protein bL20 (121 aa).

This sequence belongs to the bacterial ribosomal protein bL20 family.

Binds directly to 23S ribosomal RNA and is necessary for the in vitro assembly process of the 50S ribosomal subunit. It is not involved in the protein synthesizing functions of that subunit. This chain is Large ribosomal subunit protein bL20, found in Francisella tularensis subsp. mediasiatica (strain FSC147).